The chain runs to 628 residues: ATP-dependent zinc metalloprotease FtsH (628 aa).

Residues 1-7 are Stromal-facing; sequence MKLSWKT. Residues 8-28 form a helical membrane-spanning segment; that stretch reads LLLWSLPIFVIGFFFWQGFLG. The Lumenal portion of the chain corresponds to 29-118; sequence PTTTDVGSNI…AHPPKSTSAV (90 aa). The helical transmembrane segment at 119-139 threads the bilayer; it reads WGLLGNLLFPLLLVGGLAFLF. Topologically, residues 140–628 are stromal; the sequence is RRSNNASGGP…PEKNYYISQF (489 aa). Residue 213 to 220 participates in ATP binding; the sequence is GPPGTGKT. His434 provides a ligand contact to Zn(2+). Glu435 is a catalytic residue. Zn(2+) contacts are provided by His438 and Asp512.

The protein in the central section; belongs to the AAA ATPase family. It in the C-terminal section; belongs to the peptidase M41 family. Homohexamer. Zn(2+) is required as a cofactor.

It is found in the plastid. The protein localises to the chloroplast thylakoid membrane. Functionally, acts as a processive, ATP-dependent zinc metallopeptidase. In Pyropia yezoensis (Susabi-nori), this protein is ATP-dependent zinc metalloprotease FtsH.